The following is a 294-amino-acid chain: MFGLGHNSKEISMSHIGTKFILAEKFTFDPLSNTLIDKEDSEEIIRLGSNESRILWLLAQRPNEVISRNDLHDFVWREQGFEVDDSSLTQAISTLRKMLKDSTKSPQYVKTVPKRGYQLIARVETVEEEMARESEAAHDISQPESVNEYAESSSVPSSATVVNTPQPANVVTNKSAPNLGNRLLILIAVLLPLAVLLLTNPSQTSFKPLTVVDGVAVNMPNNHPDLSNWLPSIELCVKKYNEKHTGGLKPIEVIATGGQNNQLTLNYIHSPEVSGENITLRIVANPNDAIKVCE.

Residues Met1–Arg182 lie on the Cytoplasmic side of the membrane. The ompR/PhoB-type DNA-binding region spans Thr18–Ala121. A helical membrane pass occupies residues Leu183–Leu198. At Thr199 to Glu294 the chain is on the periplasmic side.

It localises to the cell membrane. Its function is as follows. This transcription activator controls cholera toxin, pilus colonization factor and outer membrane protein expression in V.cholerae. It binds to the 5'-TTTTGAT-3' tandemly repeated DNA sequence in the cholera toxin promoter region. ToxS interacts with the C-terminal periplasmic domain of ToxR, stimulating its activity. It activates transcription at the promoters for tcpI and tcpA and this is presumably via ToxT. This Vibrio cholerae serotype O1 (strain ATCC 39315 / El Tor Inaba N16961) protein is Cholera toxin transcriptional activator (toxR).